The chain runs to 661 residues: Potassium voltage-gated channel subfamily KQT member 1 (661 aa).

2 disordered regions span residues 1-29 (MAAASTPPRAERKRXSWSRLPGAQRESAG) and 42-88 (ESGP…SLDP). Residues 1 to 119 (MAAASTPPRA…YNFLERPTGW (119 aa)) lie on the Cytoplasmic side of the membrane. Ser-27 carries the phosphoserine; by PKA modification. Residues 54–85 (VSPPSAPEPAPPASPASPAPPAADQGPQPPVS) show a composition bias toward pro residues. Residues 120-141 (KCFAYHFTVFLIVLVCLIFSVL) form a helical membrane-spanning segment. At 142–152 (STIEQYATLAT) the chain is on the extracellular side. The helical transmembrane segment at 153–175 (GTLFWMEIVLVVFFGTEYVVRLW) threads the bilayer. At 176–191 (SAGCRSKYVGLWGRLR) the chain is on the cytoplasmic side. The chain crosses the membrane as a helical span at residues 192–217 (FARKPISIIDLIVVVASMVVLCVGSK). Over 218-225 (GQVFATSA) the chain is Extracellular. Residues 226–241 (IRGIRFLQILRMLHVD) traverse the membrane as a helical; Voltage-sensor segment. The segment at 237–245 (MLHVDRQGG) is interaction with KCNE3. The Cytoplasmic segment spans residues 242–259 (RQGGTWRLLGSVVFIHRQ). Residue Gln-243 coordinates a 1,2-diacyl-sn-glycero-3-phospho-(1D-myo-inositol-4,5-bisphosphate). The helical transmembrane segment at 260–282 (ELITTLYIGFLGLIFSSYFVYLA) threads the bilayer. Topologically, residues 283–298 (EKDAVNESGRVEFGSY) are extracellular. Asn-288 carries an N-linked (GlcNAc...) asparagine glycan. The segment at residues 299-319 (ADALWWGVVTVTTIGYGDKVP) is an intramembrane region (pore-forming). Over 320 to 321 (QT) the chain is Extracellular. Residues 322-347 (WVGKTIASCFSVFAISFFALPAGILG) form a helical membrane-spanning segment. The Cytoplasmic portion of the chain corresponds to 348–661 (SGFALKVQQK…VPRRDPEEGS (314 aa)). An interaction with CALM region spans residues 369 to 381 (AAASLIQTAWRCY). Phosphoserine occurs at positions 406 and 408. The segment at 514 to 528 (KVIRRMQYFVAKKKF) is interaction with CALM; calcium-dependent. Residues 534–571 (PYDVRDVIEQYSQGHLNLMVRIKELQRRLDQSIGKPSL) are interaction with KCNE1 C-terminus. A coiled-coil region spans residues 584 to 620 (SNSIGARLNRVEDKVTQLDQRLVLIADMLQQLLALHQ). Positions 587–615 (IGARLNRVEDKVTQLDQRLVLIADMLQQL) are interaction with AKAP9. Residues 588 to 619 (GARLNRVEDKVTQLDQRLVLIADMLQQLLALH) are C-terminal assembly domain (tetramerization). Positions 624 to 661 (HGGAHPAQARDGDPADPELFLPTYEQLTVPRRDPEEGS) are disordered.

The protein belongs to the potassium channel family. KQT (TC 1.A.1.15) subfamily. Kv7.1/KCNQ1 sub-subfamily. Tetramer. Heterotetramer with KCNE1; targets to the membrane raft. Interacts (via C-terminus) with CALM; forms a heterooctameric structure (with 4:4 KCNQ1:CALM stoichiometry) in a calcium-independent manner. Interacts with AKAP9; targets protein kinase A (PKA) catalytic and regulatory subunits and protein phosphatase 1 (PP1) to the KCNQ1-KCNE1 complex, allowing PKA-mediated phosphorylation and increase of delayed rectifier potassium channel activity. Interacts with KCNE2; form a heterooligomer complex that targets to the membrane raft and leading to currents with an apparently instantaneous activation, a rapid deactivation process and a linear current-voltage relationship and decreases the amplitude of the outward current. Interacts with AP2M1; mediates estrogen-induced internalization via clathrin-coated vesicles. Interacts with NEDD4L; promotes internalization and decreases I(Ks) currents. Interacts with USP2; counteracts the NEDD4L-specific down-regulation of I(Ks) and restore plasma membrane localization. Heterotetramer with KCNQ5; has a voltage-gated potassium channel activity. Interacts with KCNE3; four KCNE3 molecules are bound to one KCNQ1 tetramer (4:4 KCNQ1:KCNE3 stoichiometry); alters membrane raft localization; affects KCNQ1 structure and gating properties. Interacts with KCNE4; impairs KCNQ1 localization in lipid rafts and inhibits voltage-gated potassium channel activity. Interacts with KCNE5; impairs KCNQ1 localization in lipid rafts and only conducts current upon strong and continued depolarization. Interacts with SLC5A3; forms coregulatory channel-transporter complexes that modulate Na(+)-coupled myo-inositol influx through the transporter. In terms of processing, phosphorylation at Ser-27 by PKA; increases delayed rectifier potassium channel activity of the KCNQ1-KCNE1 complex through a macromolecular complex that includes PKA, PP1, and the targeting protein AKAP9. Ubiquitinated by NEDD4L; promotes internalization. The ubiquitinylated form is internalized through a clathrin-mediated endocytosis by interacting with AP2M1 and is recycled back to the cell membrane via RAB4A and RAB11A. Post-translationally, deubiquitinated by USP2; counteracts the NEDD4L-specific down-regulation of I(Ks) and restores the membrane localization.

Its subcellular location is the cell membrane. The protein resides in the cytoplasmic vesicle membrane. The protein localises to the early endosome. It is found in the membrane raft. It localises to the endoplasmic reticulum. Its subcellular location is the basolateral cell membrane. The protein resides in the apical cell membrane. The enzyme catalyses K(+)(in) = K(+)(out). PIP2 molecule is essential to activate KCNQ channels by inducing the coupling of the voltage-sensing domain (VSD) and the pore-forming domain (PD). Upon channel activation, PIP2 disrupts the VSD-calmodulin/CALM interactions, causing the release of CALM from the VSD which triggers the opening of the gate. Calcium potentiates KCNQ1 channel current through calcium-bound CALM. Calcium-bound CALM competes with PIP2 to stabilize the channel open state. Pore-forming subunit of the voltage-gated potassium (Kv) channel involved in the regulation of cardiomyocyte excitability and important in normal development and functions of myocardium, inner ear, stomach and colon. Associates with KCNE beta subunits that modulates current kinetics. Induces a voltage-dependent by rapidly activating and slowly deactivating potassium-selective outward current. Also promotes a delayed voltage activated potassium current showing outward rectification characteristic. During beta-adrenergic receptor stimulation participates in cardiac repolarization by associating with KCNE1 to form the I(Ks) cardiac potassium current that increases the amplitude and slows down the activation kinetics of outward potassium current I(Ks). Muscarinic agonist oxotremorine-M strongly suppresses KCNQ1/KCNE1 current. When associated with KCNE3, forms the potassium channel that is important for cyclic AMP-stimulated intestinal secretion of chloride ions. This interaction with KCNE3 is reduced by 17beta-estradiol, resulting in the reduction of currents. During conditions of increased substrate load, maintains the driving force for proximal tubular and intestinal sodium ions absorption, gastric acid secretion, and cAMP-induced jejunal chloride ions secretion. Allows the provision of potassium ions to the luminal membrane of the secretory canaliculus in the resting state as well as during stimulated acid secretion. When associated with KCNE2, forms a heterooligomer complex leading to currents with an apparently instantaneous activation, a rapid deactivation process and a linear current-voltage relationship and decreases the amplitude of the outward current. When associated with KCNE4, inhibits voltage-gated potassium channel activity. When associated with KCNE5, this complex only conducts current upon strong and continued depolarization. Also forms a heterotetramer with KCNQ5 that has a voltage-gated potassium channel activity. Binds with phosphatidylinositol 4,5-bisphosphate. KCNQ1-KCNE2 channel associates with Na(+)-coupled myo-inositol symporter in the apical membrane of choroid plexus epithelium and regulates the myo-inositol gradient between blood and cerebrospinal fluid with an impact on neuron excitability. The chain is Potassium voltage-gated channel subfamily KQT member 1 from Oryctolagus cuniculus (Rabbit).